The primary structure comprises 285 residues: CCR4-NOT transcription complex subunit 7 (285 aa).

Positions 40, 42, 161, 230, and 278 each coordinate a divalent metal cation.

Belongs to the CAF1 family. In terms of assembly, component of the CCR4-NOT complex; distinct complexes seem to exist that differ in the participation of probably mutually exclusive catalytic subunits; the complex contains two deadenylase subunits, CNOT6 or CNOT6L, and CNOT7 or CNOT8. In the complex, interacts directly with CNOT1. Interacts with AGO2. Interacts with TOB1; recruited by TOB1 to a ternary complex with CPEB3 which is required for mRNA deadenylation and decay. Interacts with BTG1. Interacts with BTG2. Interacts with NANOS2. Interacts with ZFP36, ZFP36L1 and ZFP36L2; these interactions are inhibited in response to phorbol 12-myristate 13-acetate (PMA) treatment in a p38 MAPK-dependent manner. Interacts with BTG4. Interacts with EIF4E; this interaction is increased by CNOT7 interaction with BTG4. The cofactor is Mn(2+). Requires Mg(2+) as cofactor. Co(2+) is required as a cofactor.

Its subcellular location is the nucleus. It is found in the cytoplasm. The protein localises to the P-body. It localises to the cytoplasmic ribonucleoprotein granule. It carries out the reaction Exonucleolytic cleavage of poly(A) to 5'-AMP.. Functionally, has 3'-5' poly(A) exoribonuclease activity for synthetic poly(A) RNA substrate. Its function seems to be partially redundant with that of CNOT8. Catalytic component of the CCR4-NOT complex which is one of the major cellular mRNA deadenylases and is linked to various cellular processes including bulk mRNA degradation, miRNA-mediated repression, translational repression during translational initiation and general transcription regulation. During miRNA-mediated repression the complex also seems to act as translational repressor during translational initiation. Additional complex functions may be a consequence of its influence on mRNA expression. Required for miRNA-mediated mRNA deadenylation. Associates with members of the BTG family such as TOB1 and BTG2 and is required for their anti-proliferative activity. The sequence is that of CCR4-NOT transcription complex subunit 7 (CNOT7) from Bos taurus (Bovine).